Reading from the N-terminus, the 404-residue chain is Alpha-galactosidase A (404 aa).

An N-terminal signal peptide occupies residues 1-23; sequence MRKQLLLGLGLVSALLVSVQASA. 2 cysteine pairs are disulfide-bonded: Cys-45-Cys-77 and Cys-124-Cys-154. Asp-152 functions as the Nucleophile in the catalytic mechanism. Substrate is bound at residue 185–189; that stretch reads EWGDN. Asp-207 acts as the Proton donor in catalysis.

Belongs to the glycosyl hydrolase 27 family.

The enzyme catalyses Hydrolysis of terminal, non-reducing alpha-D-galactose residues in alpha-D-galactosides, including galactose oligosaccharides, galactomannans and galactolipids.. Hydrolyzes galactomannan found in plant cell wall, by cleaving alpha-1,6-D-galactose side-chains from the mannan backbone. Appears to act in synergy with mannanase (ManA) to elicit hydrolysis of galactomannan. Has greater activity against galactomannans with decreased degree of polymerisation values. To a lesser extent, is also able to degrade other galactosides containing alpha-1,6-linked D-galactose, such as melibiose and stachyose. This is Alpha-galactosidase A (agaA) from Cellvibrio japonicus (strain Ueda107) (Pseudomonas fluorescens subsp. cellulosa).